We begin with the raw amino-acid sequence, 265 residues long: MKIGVDAGGTLIKIVQEKNGERTYSTRLTTEIEEVIQWLNQQDCNNINLTGGQAAMINEQLNCESRVFVEFDAAAKGLEILLEEQGHFLDDYIFTNVGTGTSLHFSNGKAQKRVGGIGTGGGMIQGLGYLLTGISNYKQLTDTAQNGNRDIIDLKVKHIYKDSEPPISGDLTAANFGNVLHHLDESFTDADKLASVIAVVGEVITTMSITVAREHNTKNVAYIGSSFHNNDLLKDVVKDYTVLRGCEPYYIEHGAFSGALGSIHL.

6 to 13 (DAGGTLIK) lines the ATP pocket. Glutamate 70 serves as the catalytic Proton acceptor. Residues threonine 99, 121-125 (GGMIQ), tyrosine 137, and serine 225 each bind ATP.

Belongs to the type II pantothenate kinase family. In terms of assembly, homodimer.

The protein localises to the cytoplasm. The catalysed reaction is (R)-pantothenate + ATP = (R)-4'-phosphopantothenate + ADP + H(+). The protein operates within cofactor biosynthesis; coenzyme A biosynthesis; CoA from (R)-pantothenate: step 1/5. Functionally, catalyzes the phosphorylation of pantothenate (Pan), the first step in CoA biosynthesis. The protein is Type II pantothenate kinase of Staphylococcus saprophyticus subsp. saprophyticus (strain ATCC 15305 / DSM 20229 / NCIMB 8711 / NCTC 7292 / S-41).